Reading from the N-terminus, the 158-residue chain is 2-C-methyl-D-erythritol 2,4-cyclodiphosphate synthase (158 aa).

A divalent metal cation contacts are provided by D9 and H11. 4-CDP-2-C-methyl-D-erythritol 2-phosphate contacts are provided by residues 9-11 (DVH) and 35-36 (HS). Residue H43 coordinates a divalent metal cation. 4-CDP-2-C-methyl-D-erythritol 2-phosphate contacts are provided by residues 57–59 (DIG), 62–66 (FPDTD), 101–107 (AQKPKMA), 133–136 (TTTE), F140, and R143.

Belongs to the IspF family. Homotrimer. Requires a divalent metal cation as cofactor.

The catalysed reaction is 4-CDP-2-C-methyl-D-erythritol 2-phosphate = 2-C-methyl-D-erythritol 2,4-cyclic diphosphate + CMP. Its pathway is isoprenoid biosynthesis; isopentenyl diphosphate biosynthesis via DXP pathway; isopentenyl diphosphate from 1-deoxy-D-xylulose 5-phosphate: step 4/6. Functionally, involved in the biosynthesis of isopentenyl diphosphate (IPP) and dimethylallyl diphosphate (DMAPP), two major building blocks of isoprenoid compounds. Catalyzes the conversion of 4-diphosphocytidyl-2-C-methyl-D-erythritol 2-phosphate (CDP-ME2P) to 2-C-methyl-D-erythritol 2,4-cyclodiphosphate (ME-CPP) with a corresponding release of cytidine 5-monophosphate (CMP). This is 2-C-methyl-D-erythritol 2,4-cyclodiphosphate synthase from Bacillus cereus (strain ATCC 10987 / NRS 248).